We begin with the raw amino-acid sequence, 407 residues long: Peptidase T (407 aa).

Residue His-78 participates in Zn(2+) binding. The active site involves Asp-80. Zn(2+) is bound at residue Asp-139. Glu-173 serves as the catalytic Proton acceptor. Positions 174, 196, and 378 each coordinate Zn(2+).

It belongs to the peptidase M20B family. Zn(2+) is required as a cofactor.

The protein resides in the cytoplasm. The catalysed reaction is Release of the N-terminal residue from a tripeptide.. Cleaves the N-terminal amino acid of tripeptides. In Shewanella pealeana (strain ATCC 700345 / ANG-SQ1), this protein is Peptidase T.